The sequence spans 1235 residues: Structural maintenance of chromosomes protein 1B (1235 aa).

32–39 (GPNGSGKS) is a binding site for ATP. Residues 156-490 (EEISTSGELI…RSELQNAGID (335 aa)) adopt a coiled-coil conformation. Residues 514-629 (SVFGRLFDLC…ETMEEARHIA (116 aa)) enclose the SMC hinge domain. Lys648 and Lys713 each carry N6-acetyllysine. Coiled coils occupy residues 666–934 (WDEK…LDCK), 970–994 (EKEE…SDQE), and 1022–1049 (RALE…KEAR). Lys1033 is subject to N6-acetyllysine.

The protein belongs to the SMC family. SMC1 subfamily. In terms of assembly, forms a heterodimer with SMC3. Component of a meiosis-specific cohesin complex, probably composed of the SMC1B and SMC3 heterodimer attached via their SMC hinge domain, RAD21 (or its meiosis-specific related protein REC8), which link them, and STAG3, which interacts with RAD21 or REC8. The cohesin complex interacts with the cohesin loading complex subunits NIPBL/Scc2 (via HEAT repeats) and MAU2/Scc4. NIPBL directly contacts all members of the complex, RAD21, SMC1A/B, SMC3 and STAG1.

Its subcellular location is the nucleus. It localises to the chromosome. The protein localises to the centromere. Its function is as follows. Meiosis-specific component of cohesin complex. Required for the maintenance of meiotic cohesion, but not, or only to a minor extent, for its establishment. Contributes to axial element (AE) formation and the organization of chromatin loops along the AE. Plays a key role in synapsis, recombination and chromosome movements. The cohesin complex is required for the cohesion of sister chromatids after DNA replication. The cohesin complex apparently forms a large proteinaceous ring within which sister chromatids can be trapped. At anaphase, the complex is cleaved and dissociates from chromatin, allowing sister chromatids to segregate. The meiosis-specific cohesin complex probably replaces mitosis specific cohesin complex when it dissociates from chromatin during prophase I. The polypeptide is Structural maintenance of chromosomes protein 1B (SMC1B) (Homo sapiens (Human)).